We begin with the raw amino-acid sequence, 596 residues long: Selenocysteine-specific elongation factor (596 aa).

Residues 5-217 form the tr-type G domain; sequence RVNVNVGVLG…LLTSQISIPT (213 aa). Positions 14-21 are G1; the sequence is GHIDSGKT. GDP-binding residues include Gly19, Thr21, and Ala22. Residues Gly19, Thr21, and Ala22 each coordinate GTP. Mg(2+) is bound at residue Thr21. Residues 46–50 are G2; that stretch reads GITLD. Mg(2+) is bound by residues Thr48 and Asp92. Residues 92 to 95 are G3; that stretch reads DCPG. A G4 region spans residues 146–149; the sequence is NKID. Residues Asp149 and Lys187 each contribute to the GDP site. Asp149 and Lys187 together coordinate GTP. The G5 stretch occupies residues 185–187; sequence AAK. Ser537 bears the Phosphoserine mark. Thr545 is subject to Phosphothreonine. The Nuclear localization signal motif lies at 547–553; sequence ALKKRAR. The segment at 548 to 573 is disordered; the sequence is LKKRARAGRGEATRQEESAERSEPSQ. The span at 555 to 571 shows a compositional bias: basic and acidic residues; the sequence is GRGEATRQEESAERSEP. Arg556 bears the Omega-N-methylarginine mark.

The protein belongs to the TRAFAC class translation factor GTPase superfamily. Classic translation factor GTPase family. SelB subfamily. Mg(2+) serves as cofactor. The cofactor is Mn(2+).

The protein resides in the cytoplasm. It is found in the nucleus. It catalyses the reaction GTP + H2O = GDP + phosphate + H(+). Translation factor required for the incorporation of the rare amino acid selenocysteine encoded by UGA codons. Replaces the eRF1-eRF3-GTP ternary complex for the insertion of selenocysteine directed by the UGA codon. Insertion of selenocysteine at UGA codons is mediated by SECISBP2 and EEFSEC: SECISBP2 (1) specifically binds the SECIS sequence once the 80S ribosome encounters an in-frame UGA codon and (2) contacts the RPS27A/eS31 of the 40S ribosome before ribosome stalling. (3) GTP-bound EEFSEC then delivers selenocysteinyl-tRNA(Sec) to the 80S ribosome and adopts a preaccommodated state conformation. (4) After GTP hydrolysis, EEFSEC dissociates from the assembly, selenocysteinyl-tRNA(Sec) accommodates, and peptide bond synthesis and selenoprotein elongation occur. This is Selenocysteine-specific elongation factor from Homo sapiens (Human).